The chain runs to 247 residues: Cell division protein ZapD (247 aa).

The protein belongs to the ZapD family. Interacts with FtsZ.

It is found in the cytoplasm. Functionally, cell division factor that enhances FtsZ-ring assembly. Directly interacts with FtsZ and promotes bundling of FtsZ protofilaments, with a reduction in FtsZ GTPase activity. The chain is Cell division protein ZapD from Shigella flexneri.